Here is a 114-residue protein sequence, read N- to C-terminus: Large ribosomal subunit protein bL19 (114 aa).

Belongs to the bacterial ribosomal protein bL19 family.

This protein is located at the 30S-50S ribosomal subunit interface and may play a role in the structure and function of the aminoacyl-tRNA binding site. This Thermoanaerobacter sp. (strain X514) protein is Large ribosomal subunit protein bL19.